Consider the following 206-residue polypeptide: Ras-related protein RABG3a (206 aa).

Position 15–22 (15–22) interacts with GTP; it reads GDSGVGKT. The Effector region motif lies at 37 to 45; it reads YKATIGADF. Residues 63–67, 125–128, and 158–159 each bind GTP; these read DTAGQ, NKID, and SA. Residues Cys-204 and Cys-206 are each lipidated (S-geranylgeranyl cysteine). A Cysteine methyl ester modification is found at Cys-206.

It belongs to the small GTPase superfamily. Rab family.

It localises to the cell membrane. Functionally, intracellular vesicle trafficking and protein transport. The protein is Ras-related protein RABG3a (RABG3A) of Arabidopsis thaliana (Mouse-ear cress).